The chain runs to 161 residues: Sec-independent protein translocase protein TatB (161 aa).

The chain crosses the membrane as a helical span at residues F2 to G22. The interval D102–T161 is disordered. The segment covering S111–G126 has biased composition (low complexity). Residues D131–T161 show a composition bias toward basic and acidic residues.

The protein belongs to the TatB family. As to quaternary structure, the Tat system comprises two distinct complexes: a TatABC complex, containing multiple copies of TatA, TatB and TatC subunits, and a separate TatA complex, containing only TatA subunits. Substrates initially bind to the TatABC complex, which probably triggers association of the separate TatA complex to form the active translocon.

It localises to the cell membrane. Its function is as follows. Part of the twin-arginine translocation (Tat) system that transports large folded proteins containing a characteristic twin-arginine motif in their signal peptide across membranes. Together with TatC, TatB is part of a receptor directly interacting with Tat signal peptides. TatB may form an oligomeric binding site that transiently accommodates folded Tat precursor proteins before their translocation. The protein is Sec-independent protein translocase protein TatB of Streptomyces coelicolor (strain ATCC BAA-471 / A3(2) / M145).